The following is a 55-amino-acid chain: uncharacterized protein (55 aa).

A run of 2 helical transmembrane segments spans residues 2-19 (VIGL…SFIA) and 24-46 (LLSI…FRYF).

It is found in the cell membrane. This is an uncharacterized protein from Alkalihalophilus pseudofirmus (strain ATCC BAA-2126 / JCM 17055 / OF4) (Bacillus pseudofirmus).